The sequence spans 156 residues: 6,7-dimethyl-8-ribityllumazine synthase (156 aa).

5-amino-6-(D-ribitylamino)uracil is bound by residues F23, 57–59, and 81–83; these read AYE and AII. Position 86 to 87 (86 to 87) interacts with (2S)-2-hydroxy-3-oxobutyl phosphate; the sequence is ST. Catalysis depends on H89, which acts as the Proton donor. F114 contributes to the 5-amino-6-(D-ribitylamino)uracil binding site. Residue R128 coordinates (2S)-2-hydroxy-3-oxobutyl phosphate.

It belongs to the DMRL synthase family.

It carries out the reaction (2S)-2-hydroxy-3-oxobutyl phosphate + 5-amino-6-(D-ribitylamino)uracil = 6,7-dimethyl-8-(1-D-ribityl)lumazine + phosphate + 2 H2O + H(+). The protein operates within cofactor biosynthesis; riboflavin biosynthesis; riboflavin from 2-hydroxy-3-oxobutyl phosphate and 5-amino-6-(D-ribitylamino)uracil: step 1/2. Catalyzes the formation of 6,7-dimethyl-8-ribityllumazine by condensation of 5-amino-6-(D-ribitylamino)uracil with 3,4-dihydroxy-2-butanone 4-phosphate. This is the penultimate step in the biosynthesis of riboflavin. This chain is 6,7-dimethyl-8-ribityllumazine synthase, found in Campylobacter hominis (strain ATCC BAA-381 / DSM 21671 / CCUG 45161 / LMG 19568 / NCTC 13146 / CH001A).